The primary structure comprises 598 residues: Nitrate/nitrite sensor protein NarX (598 aa).

Over 1 to 14 the chain is Cytoplasmic; the sequence is MLKRCLSPLTLVNQ. A helical transmembrane segment spans residues 15 to 37; that stretch reads VALIVLLSTAIGLAGMAVSGWLV. Residues 38–151 lie on the Periplasmic side of the membrane; that stretch reads QGVQGSAHAI…DRTTEMRIET (114 aa). A helical transmembrane segment spans residues 152–174; sequence VVLVHRVMAVFMALLLVFTIIWL. Residues 175-598 are Cytoplasmic-facing; it reads RARLLQPWRQ…FTDVQGDTHE (424 aa). The HAMP domain maps to 176–228; that stretch reads ARLLQPWRQLLAMASAVSHRDFTQRANISGRNEMAMLGTALNNMSAELAESYA. One can recognise a Histidine kinase domain in the interval 393–587; that stretch reads TIARELHDSI…EVVVTFIPEK (195 aa). H399 carries the phosphohistidine; by autocatalysis modification.

Its subcellular location is the cell inner membrane. It carries out the reaction ATP + protein L-histidine = ADP + protein N-phospho-L-histidine.. Its function is as follows. Acts as a sensor for nitrate/nitrite and transduces signal of nitrate availability to the NarL protein and of both nitrate/nitrite to the NarP protein. NarX probably activates NarL and NarP by phosphorylation in the presence of nitrate. NarX also plays a negative role in controlling NarL activity, probably through dephosphorylation in the absence of nitrate. The protein is Nitrate/nitrite sensor protein NarX (narX) of Escherichia coli O157:H7.